A 297-amino-acid polypeptide reads, in one-letter code: Superoxide dismutase 1 copper chaperone (297 aa).

Position 11 (cysteine 11) interacts with Cu cation. The segment at 222-263 is disordered; the sequence is GSSCCSKKDSSPSEKPSCCSQEKKSCCSSKKPSCCSQEKKGC. Low complexity predominate over residues 234 to 257; it reads SEKPSCCSQEKKSCCSSKKPSCCS.

This sequence belongs to the CCS1 family.

It is found in the cytoplasm. Copper chaperone for superoxide dismutase 1 (sod1). Binds copper ions and delivers them specifically to sod1. Also has a role in cell protection against copper ion toxicity during conditions of copper excess. The C-terminal region is thought to act specifically in this sequestration role. The polypeptide is Superoxide dismutase 1 copper chaperone (ccs1) (Schizosaccharomyces pombe (strain 972 / ATCC 24843) (Fission yeast)).